We begin with the raw amino-acid sequence, 103 residues long: Co-chaperonin GroES (103 aa).

This sequence belongs to the GroES chaperonin family. As to quaternary structure, heptamer of 7 subunits arranged in a ring. Interacts with the chaperonin GroEL.

Its subcellular location is the cytoplasm. Its function is as follows. Together with the chaperonin GroEL, plays an essential role in assisting protein folding. The GroEL-GroES system forms a nano-cage that allows encapsulation of the non-native substrate proteins and provides a physical environment optimized to promote and accelerate protein folding. GroES binds to the apical surface of the GroEL ring, thereby capping the opening of the GroEL channel. The protein is Co-chaperonin GroES of Nostoc sp. (strain PCC 7120 / SAG 25.82 / UTEX 2576).